We begin with the raw amino-acid sequence, 329 residues long: Glycerol-3-phosphate dehydrogenase [NAD(P)+] (329 aa).

NADPH contacts are provided by Ser-13, Trp-14, His-34, and Lys-105. Sn-glycerol 3-phosphate contacts are provided by Lys-105, Gly-134, and Ser-136. Ala-138 serves as a coordination point for NADPH. Sn-glycerol 3-phosphate-binding residues include Lys-189, Asp-242, Ser-252, Arg-253, and Asn-254. Residue Lys-189 is the Proton acceptor of the active site. Position 253 (Arg-253) interacts with NADPH. Positions 277 and 279 each coordinate NADPH.

This sequence belongs to the NAD-dependent glycerol-3-phosphate dehydrogenase family.

Its subcellular location is the cytoplasm. The enzyme catalyses sn-glycerol 3-phosphate + NAD(+) = dihydroxyacetone phosphate + NADH + H(+). It carries out the reaction sn-glycerol 3-phosphate + NADP(+) = dihydroxyacetone phosphate + NADPH + H(+). Its pathway is membrane lipid metabolism; glycerophospholipid metabolism. Catalyzes the reduction of the glycolytic intermediate dihydroxyacetone phosphate (DHAP) to sn-glycerol 3-phosphate (G3P), the key precursor for phospholipid synthesis. The protein is Glycerol-3-phosphate dehydrogenase [NAD(P)+] of Legionella pneumophila subsp. pneumophila (strain Philadelphia 1 / ATCC 33152 / DSM 7513).